Reading from the N-terminus, the 291-residue chain is Phosphoribosylaminoimidazole-succinocarboxamide synthase (291 aa).

The protein belongs to the SAICAR synthetase family.

The catalysed reaction is 5-amino-1-(5-phospho-D-ribosyl)imidazole-4-carboxylate + L-aspartate + ATP = (2S)-2-[5-amino-1-(5-phospho-beta-D-ribosyl)imidazole-4-carboxamido]succinate + ADP + phosphate + 2 H(+). It participates in purine metabolism; IMP biosynthesis via de novo pathway; 5-amino-1-(5-phospho-D-ribosyl)imidazole-4-carboxamide from 5-amino-1-(5-phospho-D-ribosyl)imidazole-4-carboxylate: step 1/2. In Candida maltosa (Yeast), this protein is Phosphoribosylaminoimidazole-succinocarboxamide synthase (ADE1).